A 267-amino-acid chain; its full sequence is Neutrophil elastase (267 aa).

The signal sequence occupies residues 1-27 (MTLGRRLACLFLACVLPALLLGGTALA). Positions 28–29 (SE) are excised as a propeptide. The region spanning 30 to 247 (IVGGRRARPH…FVNWIDSIIQ (218 aa)) is the Peptidase S1 domain. Cysteine 55 and cysteine 71 are disulfide-bonded. Histidine 70 serves as the catalytic Charge relay system. Asparagine 88 is a glycosylation site (N-linked (GlcNAc...) asparagine). The active-site Charge relay system is the aspartate 117. 2 N-linked (GlcNAc...) asparagine glycosylation sites follow: asparagine 124 and asparagine 173. 3 disulfides stabilise this stretch: cysteine 151-cysteine 208, cysteine 181-cysteine 187, and cysteine 198-cysteine 223. Serine 202 serves as the catalytic Charge relay system.

The protein belongs to the peptidase S1 family. Elastase subfamily. As to quaternary structure, interacts with NOTCH2NL. Interacts with agaphelin, an antihemostatic protein from Anopheles gambiae. In terms of tissue distribution, bone marrow cells. Neutrophil.

Its subcellular location is the cytoplasmic vesicle. It is found in the phagosome. The enzyme catalyses Hydrolysis of proteins, including elastin. Preferential cleavage: Val-|-Xaa &gt; Ala-|-Xaa.. Its function is as follows. Serine protease that modifies the functions of natural killer cells, monocytes and granulocytes. Inhibits C5a-dependent neutrophil enzyme release and chemotaxis. Promotes cleavage of GSDMB, thereby inhibiting pyroptosis. Promotes blood coagulation. Through the activation of the platelet fibrinogen receptor integrin alpha-IIb/beta-3, potentiates platelet aggregation induced by a threshold concentration of cathepsin G (CTSG). Cleaves and thus inactivates tissue factor pathway inhibitor (TFPI). Capable of killing E.coli but not S.aureus in vitro; digests outer membrane protein A (ompA) in E.coli and K.pneumoniae. In Homo sapiens (Human), this protein is Neutrophil elastase (ELANE).